The primary structure comprises 311 residues: Glycosyltransferase 6 domain-containing protein 1 (311 aa).

The Cytoplasmic segment spans residues 1 to 5 (MKAKR). A helical; Signal-anchor for type II membrane protein transmembrane segment spans residues 6–26 (RILLQLLTFCLFLLLLAKIHF). The Lumenal segment spans residues 27–311 (RNHQEEELLL…KIAHHPIDTL (285 aa)). An N-linked (GlcNAc...) asparagine glycan is attached at asparagine 77. Substrate is bound by residues 85-90 (FAVGSL), 176-178 (NIN), and 198-201 (HPWW). Residue glutamate 266 is the Nucleophile of the active site.

Belongs to the glycosyltransferase 6 family. The cofactor is Mn(2+).

It is found in the membrane. The protein is Glycosyltransferase 6 domain-containing protein 1 (Glt6d1) of Mus musculus (Mouse).